Consider the following 81-residue polypeptide: Acyl carrier protein (81 aa).

One can recognise a Carrier domain in the interval 2–80 (ASNEEILAGL…DAVSFIANAQ (79 aa)). The residue at position 40 (serine 40) is an O-(pantetheine 4'-phosphoryl)serine.

It belongs to the acyl carrier protein (ACP) family. In terms of processing, 4'-phosphopantetheine is transferred from CoA to a specific serine of apo-ACP by AcpS. This modification is essential for activity because fatty acids are bound in thioester linkage to the sulfhydryl of the prosthetic group.

Its subcellular location is the cytoplasm. The protein operates within lipid metabolism; fatty acid biosynthesis. In terms of biological role, carrier of the growing fatty acid chain in fatty acid biosynthesis. The chain is Acyl carrier protein from Paenarthrobacter aurescens (strain TC1).